The sequence spans 258 residues: Glucose 1-dehydrogenase 2 (258 aa).

11–35 (IVTGSSKGIGKAIAERFGKEKMNVV) is a binding site for NADP(+). Ser146 provides a ligand contact to substrate. The active-site Proton acceptor is Tyr159.

Belongs to the short-chain dehydrogenases/reductases (SDR) family. In terms of assembly, homotetramer.

The catalysed reaction is D-glucose + NAD(+) = D-glucono-1,5-lactone + NADH + H(+). The enzyme catalyses D-glucose + NADP(+) = D-glucono-1,5-lactone + NADPH + H(+). The protein is Glucose 1-dehydrogenase 2 (ycdF) of Bacillus subtilis (strain 168).